We begin with the raw amino-acid sequence, 462 residues long: Nuclear factor interleukin-3-regulated protein (462 aa).

Lysine 24 participates in a covalent cross-link: Glycyl lysine isopeptide (Lys-Gly) (interchain with G-Cter in SUMO2). The region spanning 73 to 136 (DAMYWEKRRK…GLISSTAYAQ (64 aa)) is the bZIP domain. The tract at residues 79-95 (KRRKNNEAAKRSREKRR) is basic motif. Positions 99–106 (LVLENKLI) are leucine-zipper. Disordered stretches follow at residues 189–237 (DVSE…DDRG) and 258–302 (SPPL…IHSP). Residues 201-210 (ESSVQGSCRS) show a composition bias toward polar residues. Lysine 214 is covalently cross-linked (Glycyl lysine isopeptide (Lys-Gly) (interchain with G-Cter in SUMO2)). Lysine 219 is covalently cross-linked (Glycyl lysine isopeptide (Lys-Gly) (interchain with G-Cter in SUMO1); alternate). Lysine 219 is covalently cross-linked (Glycyl lysine isopeptide (Lys-Gly) (interchain with G-Cter in SUMO2); alternate). Over residues 227–237 (SYTREPRDDRG) the composition is skewed to basic and acidic residues. Residues 264–274 (VNRSSSNSPRT) show a composition bias toward polar residues. The tract at residues 299–363 (IHSPVELKHV…PIDMTSKRHF (65 aa)) is necessary for transcriptional repression and sufficient for interaction with DR1. Serine 301 bears the Phosphoserine mark. Glycyl lysine isopeptide (Lys-Gly) (interchain with G-Cter in SUMO2) cross-links involve residues lysine 306, lysine 314, lysine 326, lysine 332, lysine 337, and lysine 350. Residue serine 353 is modified to Phosphoserine. Glycyl lysine isopeptide (Lys-Gly) (interchain with G-Cter in SUMO2) cross-links involve residues lysine 360, lysine 394, lysine 401, lysine 406, lysine 412, lysine 419, lysine 424, lysine 434, and lysine 448.

This sequence belongs to the bZIP family. NFIL3 subfamily. As to quaternary structure, homodimer. Binds DNA as a dimer. Interacts with DR1. Interacts with PER2 and CRY2. Interacts with NR0B2. Interacts with MYSM1. Expressed in bladder stomach, thyroid, spinal cord, lymph node, trachea, adrenal gland, bone marrow and muscle.

The protein localises to the nucleus. Functionally, acts as a transcriptional regulator that recognizes and binds to the sequence 5'-[GA]TTA[CT]GTAA[CT]-3', a sequence present in many cellular and viral promoters. Represses transcription from promoters with activating transcription factor (ATF) sites. Represses promoter activity in osteoblasts. Represses transcriptional activity of PER1. Represses transcriptional activity of PER2 via the B-site on the promoter. Activates transcription from the interleukin-3 promoter in T-cells. Competes for the same consensus-binding site with PAR DNA-binding factors (DBP, HLF and TEF). Component of the circadian clock that acts as a negative regulator for the circadian expression of PER2 oscillation in the cell-autonomous core clock. Protects pro-B cells from programmed cell death. Represses the transcription of CYP2A5. Positively regulates the expression and activity of CES2 by antagonizing the repressive action of NR1D1 on CES2. Required for the development of natural killer cell precursors. This Homo sapiens (Human) protein is Nuclear factor interleukin-3-regulated protein (NFIL3).